A 168-amino-acid polypeptide reads, in one-letter code: Thioredoxin Y, chloroplastic (168 aa).

The transit peptide at 1–58 (MAAFTSTTTAAAASPTPCRPAALVARSSAAPLRSAAPVVVAAGLRRAAAPSRRGATLR) directs the protein to the chloroplast. Positions 59–165 (VQAKKQTFSS…LIQQIESALE (107 aa)) constitute a Thioredoxin domain. Catalysis depends on nucleophile residues cysteine 89 and cysteine 92. A disulfide bridge connects residues cysteine 89 and cysteine 92.

Belongs to the thioredoxin family. Plant Y-type subfamily.

The protein localises to the plastid. Its subcellular location is the chloroplast. In terms of biological role, probable thiol-disulfide oxidoreductase that may participate in various redox reactions. The chain is Thioredoxin Y, chloroplastic from Oryza sativa subsp. japonica (Rice).